We begin with the raw amino-acid sequence, 369 residues long: S-adenosyl-L-methionine-dependent uroporphyrinogen III methyltransferase, chloroplastic (369 aa).

The N-terminal 28 residues, 1–28, are a transit peptide targeting the chloroplast; it reads MALVQRIPISSSSIRNWQQARTNLTPIC. S-adenosyl-L-homocysteine-binding positions include Pro-124, 200–202, 230–231, Met-284, and Thr-341; these read GGD and TA.

Belongs to the precorrin methyltransferase family. Mostly expressed in leaves, and, to a lower extent, in stems, flowers and siliques.

It localises to the plastid. It is found in the chloroplast. It catalyses the reaction uroporphyrinogen III + 2 S-adenosyl-L-methionine = precorrin-2 + 2 S-adenosyl-L-homocysteine + H(+). The protein operates within porphyrin-containing compound metabolism; siroheme biosynthesis; precorrin-2 from uroporphyrinogen III: step 1/1. Essential protein required for siroheme biosynthesis. Catalyzes the two successive C-2 and C-7 methylation reactions involved in the conversion of uroporphyrinogen III to precorrin-2 via the intermediate formation of precorrin-1. It is a step in the biosynthesis of siroheme. Promotes nitrogen and sulfur assimilation as well as photosynthesis efficiency by triggering chlorophyll, nitrite reductase (NiR) and sulfite reductase (SiR) biosynthesis. This is S-adenosyl-L-methionine-dependent uroporphyrinogen III methyltransferase, chloroplastic from Arabidopsis thaliana (Mouse-ear cress).